The primary structure comprises 582 residues: Dihydroxy-acid dehydratase 3 (582 aa).

Position 67 (Cys-67) interacts with [2Fe-2S] cluster. Asp-99 lines the Mg(2+) pocket. Cys-140 is a binding site for [2Fe-2S] cluster. Mg(2+) is bound by residues Asp-141 and Lys-142. Residue Lys-142 is modified to N6-carboxylysine. Cys-212 is a binding site for [2Fe-2S] cluster. Glu-462 lines the Mg(2+) pocket. Catalysis depends on Ser-488, which acts as the Proton acceptor.

The protein belongs to the IlvD/Edd family. Homodimer. Requires [2Fe-2S] cluster as cofactor. Mg(2+) is required as a cofactor.

The enzyme catalyses (2R)-2,3-dihydroxy-3-methylbutanoate = 3-methyl-2-oxobutanoate + H2O. It catalyses the reaction (2R,3R)-2,3-dihydroxy-3-methylpentanoate = (S)-3-methyl-2-oxopentanoate + H2O. Its pathway is amino-acid biosynthesis; L-isoleucine biosynthesis; L-isoleucine from 2-oxobutanoate: step 3/4. It functions in the pathway amino-acid biosynthesis; L-valine biosynthesis; L-valine from pyruvate: step 3/4. Functions in the biosynthesis of branched-chain amino acids. Catalyzes the dehydration of (2R,3R)-2,3-dihydroxy-3-methylpentanoate (2,3-dihydroxy-3-methylvalerate) into 2-oxo-3-methylpentanoate (2-oxo-3-methylvalerate) and of (2R)-2,3-dihydroxy-3-methylbutanoate (2,3-dihydroxyisovalerate) into 2-oxo-3-methylbutanoate (2-oxoisovalerate), the penultimate precursor to L-isoleucine and L-valine, respectively. The sequence is that of Dihydroxy-acid dehydratase 3 from Bradyrhizobium diazoefficiens (strain JCM 10833 / BCRC 13528 / IAM 13628 / NBRC 14792 / USDA 110).